Here is a 103-residue protein sequence, read N- to C-terminus: Large ribosomal subunit protein uL24 (103 aa).

The protein belongs to the universal ribosomal protein uL24 family. In terms of assembly, part of the 50S ribosomal subunit.

One of two assembly initiator proteins, it binds directly to the 5'-end of the 23S rRNA, where it nucleates assembly of the 50S subunit. Its function is as follows. One of the proteins that surrounds the polypeptide exit tunnel on the outside of the subunit. The sequence is that of Large ribosomal subunit protein uL24 from Bacillus mycoides (strain KBAB4) (Bacillus weihenstephanensis).